We begin with the raw amino-acid sequence, 184 residues long: Lysozyme 1 (184 aa).

The N-terminal stretch at 1–20 is a signal peptide; sequence MNGLILFCAVVFATAVCTYG. An I-type lysozyme domain is found at 69 to 184; it reads TGMVSQQCLR…WRRVQAQGCN (116 aa). 6 disulfide bridges follow: cysteine 76–cysteine 152, cysteine 81–cysteine 87, cysteine 92–cysteine 101, cysteine 114–cysteine 134, cysteine 124–cysteine 130, and cysteine 148–cysteine 166. Glutamate 84 (proton donor) is an active-site residue. The active-site Nucleophile is the aspartate 95. A substrate-binding site is contributed by 107 to 113; that stretch reads KRAYWID. Substrate is bound by residues tyrosine 138 and 159 to 161; that span reads HNG.

In terms of tissue distribution, hemolymph, labial palps, non-vesiculated cells of mantle connective tissue, cells of interlamellar junctions and epithelia surrounding the water tubes of the gills.

The protein localises to the secreted. It catalyses the reaction Hydrolysis of (1-&gt;4)-beta-linkages between N-acetylmuramic acid and N-acetyl-D-glucosamine residues in a peptidoglycan and between N-acetyl-D-glucosamine residues in chitodextrins.. Functionally, has antibacterial activity against the Gram-positive bacteria L.garvieae, M.luteus and Enterococcus sp., and the Gram-negative bacteria E.coli and V.vulnificus. Weak antibacterial activity against the Gram-negative bacterium A.hydrophila. No antibacterial activity detected against the Gram-positive bacterium S.iniae or against the Gram-negative bacterium E.ictaluri. Shows some chitinase activity but no isopeptidase activity. The chain is Lysozyme 1 from Crassostrea virginica (Eastern oyster).